We begin with the raw amino-acid sequence, 383 residues long: Protein COS7 (383 aa).

Topologically, residues 1-42 (MKENEVKDEKSVDVLSFKQLESQKIVLPQDLFRSSFTWFCYE) are cytoplasmic. Residues 43–63 (IYKSLAFRIWMLLWLPLSVWW) traverse the membrane as a helical segment. Topologically, residues 64 to 72 (KLSNNCIYP) are extracellular. The helical transmembrane segment at 73-93 (LIVSLLVLFLGPIFVLVICGL) threads the bilayer. Residues 94 to 232 (SRKRSLSKQL…RSKLTWFLKR (139 aa)) lie on the Cytoplasmic side of the membrane. A helical transmembrane segment spans residues 233-253 (IFTIYSLPLWLAFLNCICVSQ). A topological domain (extracellular) is located at residue His-254. A helical membrane pass occupies residues 255 to 275 (FCLAFRILCPGLFFLMMVWLF). Topologically, residues 276–383 (QNMRTTALLV…SRNEESLMKK (108 aa)) are cytoplasmic.

It belongs to the DUP/COS family.

It localises to the membrane. The chain is Protein COS7 (COS7) from Saccharomyces cerevisiae (strain ATCC 204508 / S288c) (Baker's yeast).